Here is a 186-residue protein sequence, read N- to C-terminus: Ribosome-recycling factor (186 aa).

Belongs to the RRF family.

Its subcellular location is the cytoplasm. In terms of biological role, responsible for the release of ribosomes from messenger RNA at the termination of protein biosynthesis. May increase the efficiency of translation by recycling ribosomes from one round of translation to another. The sequence is that of Ribosome-recycling factor from Bacteroides thetaiotaomicron (strain ATCC 29148 / DSM 2079 / JCM 5827 / CCUG 10774 / NCTC 10582 / VPI-5482 / E50).